A 104-amino-acid polypeptide reads, in one-letter code: Cell division protein FtsL (104 aa).

Residues 1-20 (MSKPSLTLPRIVLHDLWQHK) lie on the Cytoplasmic side of the membrane. A helical transmembrane segment spans residues 21 to 43 (WILLLALLVLSNAVAVVYTSHVS). Topologically, residues 44–104 (RKLTTEWDQL…PSEEIVVKVP (61 aa)) are periplasmic.

The protein belongs to the FtsL family. In terms of assembly, part of a complex composed of FtsB, FtsL and FtsQ.

It is found in the cell inner membrane. Essential cell division protein. May link together the upstream cell division proteins, which are predominantly cytoplasmic, with the downstream cell division proteins, which are predominantly periplasmic. This chain is Cell division protein FtsL, found in Shewanella oneidensis (strain ATCC 700550 / JCM 31522 / CIP 106686 / LMG 19005 / NCIMB 14063 / MR-1).